Reading from the N-terminus, the 350-residue chain is Flap endonuclease 1 (350 aa).

An N-domain region spans residues 1–101 (MGVNIREVIP…LEIERRKRVK (101 aa)). The Mg(2+) site is built by aspartate 30, aspartate 83, glutamate 155, glutamate 157, aspartate 176, aspartate 178, and aspartate 239. Residues 119-261 (AARRYAQMAA…TALKMVKAHR (143 aa)) form an I-domain region. The interval 340–348 (QQMGLDAWL) is interaction with PCNA.

The protein belongs to the XPG/RAD2 endonuclease family. FEN1 subfamily. In terms of assembly, interacts with PCNA. PCNA stimulates the nuclease activity without altering cleavage specificity. It depends on Mg(2+) as a cofactor.

Functionally, structure-specific nuclease with 5'-flap endonuclease and 5'-3' exonuclease activities involved in DNA replication and repair. During DNA replication, cleaves the 5'-overhanging flap structure that is generated by displacement synthesis when DNA polymerase encounters the 5'-end of a downstream Okazaki fragment. Binds the unpaired 3'-DNA end and kinks the DNA to facilitate 5' cleavage specificity. Cleaves one nucleotide into the double-stranded DNA from the junction in flap DNA, leaving a nick for ligation. Also involved in the base excision repair (BER) pathway. Acts as a genome stabilization factor that prevents flaps from equilibrating into structures that lead to duplications and deletions. Also possesses 5'-3' exonuclease activity on nicked or gapped double-stranded DNA. This is Flap endonuclease 1 from Hyperthermus butylicus (strain DSM 5456 / JCM 9403 / PLM1-5).